We begin with the raw amino-acid sequence, 554 residues long: Intraflagellar transport protein 56 (554 aa).

The tract at residues 1-27 is disordered; that stretch reads MMLSRAKPAVGGESPHTDKRKKKGRKI. Over residues 18-27 the composition is skewed to basic residues; that stretch reads DKRKKKGRKI. 4 TPR repeats span residues 57 to 90, 92 to 125, 151 to 184, and 468 to 501; these read EDTNLWIGYCAFHLGDYKRALEEYENAAKEENCN, EVWVNLACTYFFLGMYKQAEAAGFKAPKSRLQNR, KEDQLSLASIHYMRSHYQEAIDIYKRILLDNREY, and ANDCYKMGQFYYSAKAFDVLERLDPNPEYWEGKR.

Belongs to the IFT56 family. In terms of assembly, component of the IFT complex B. Interacts with IFT46; the interaction is direct.

The protein resides in the cell projection. It localises to the cilium. Functionally, component of the intraflagellar transport (IFT) complex B required for transport of proteins in the motile cilium. Required for transport of specific ciliary cargo proteins related to motility, while it is neither required for IFT complex B assembly or motion nor for cilium assembly. Required for efficient coupling between the accumulation of GLI2 and GLI3 at the ciliary tips and their dissociation from the negative regulator SUFU. Plays a key role in maintaining the integrity of the IFT complex B and the proper ciliary localization of the IFT complex B components. Not required for IFT complex A ciliary localization or function. Essential for maintaining proper microtubule organization within the ciliary axoneme. The polypeptide is Intraflagellar transport protein 56 (Rattus norvegicus (Rat)).